A 600-amino-acid chain; its full sequence is Kelch-like protein 24 (600 aa).

Positions 66–133 (TDVIICVEGK…VYTGKVKITT (68 aa)) constitute a BTB domain. The BACK domain occupies 168-270 (CLGIQRFADT…HPNYFVQTVE (103 aa)). Kelch repeat units follow at residues 314 to 363 (VIVV…ALRN), 365 to 407 (ILVS…VLLG), 408 to 454 (KVYV…SCVG), 456 to 502 (LFVI…SLNN), 504 to 544 (IYVA…VCNG), and 546 to 592 (IYIL…TIHR).

As to quaternary structure, forms homodimers. Interacts with GRIK2. Component of the BCR(KLHL24) E3 ubiquitin ligase complex, composed of CUL3, RBX1 and KLHL24. Interacts with CUL3. Interacts with KRT14. Autoubiquitinated. Autoubiquitination leads to proteasomal degradation and is necessary to control KLHL24 levels. In terms of tissue distribution, expressed in the skin. Found in keratinocytes, dermal fibroblasts, and melanocytes. Basal-layer keratinocytes have lower KLHL24 expression than suprabasal keratinocytes. Expressed in the brain, spinal cord, liver, testis, heart and at higher levels in the skeletal muscle.

It is found in the perikaryon. Its subcellular location is the cell projection. It localises to the axon. The protein localises to the cytoplasm. The protein resides in the cell junction. It is found in the desmosome. Its subcellular location is the adherens junction. Its function is as follows. Necessary to maintain the balance between intermediate filament stability and degradation, a process that is essential for skin integrity. As part of the BCR(KLHL24) E3 ubiquitin ligase complex, mediates ubiquitination of KRT14 and controls its levels during keratinocytes differentiation. Specifically reduces kainate receptor-mediated currents in hippocampal neurons, most probably by modulating channel properties. Has a crucial role in cardiac development and function. The sequence is that of Kelch-like protein 24 (KLHL24) from Homo sapiens (Human).